The following is a 205-amino-acid chain: uncharacterized protein (205 aa).

An N-terminal signal peptide occupies residues 1–40 (MSAGKSYRKKMKQRRMNMKISKYALGILMLSLVFVLSACG). Residues 44–82 (STKESTHDNHSDSSTHEEMDHSGSADVPEGLQESKNPKY) form a disordered region. Positions 47 to 66 (ESTHDNHSDSSTHEEMDHSG) are enriched in basic and acidic residues.

This is an uncharacterized protein from Bacillus subtilis (strain 168).